We begin with the raw amino-acid sequence, 140 residues long: Small ribosomal subunit protein uS19 (140 aa).

It belongs to the universal ribosomal protein uS19 family.

Functionally, protein S19 forms a complex with S13 that binds strongly to the 16S ribosomal RNA. This chain is Small ribosomal subunit protein uS19, found in Metallosphaera sedula (strain ATCC 51363 / DSM 5348 / JCM 9185 / NBRC 15509 / TH2).